Consider the following 940-residue polypeptide: Phagocyte signaling-impaired protein (940 aa).

One copy of the TPR repeat lies at 77–110; sequence STTLHVMTLCYKETDQLDKICQIFTSASKQLPGN.

The protein belongs to the MDM20/NAA25 family. In terms of assembly, component of the N-terminal acetyltransferase B (NatB) complex.

Its subcellular location is the lysosome. Functionally, non-catalytic subunit of the NatB complex which catalyzes acetylation of the N-terminal methionine residues of proteins beginning with Met-Asp or Met-Glu. Has 2 roles in the larval immune response: required both for the phagocytic degradation of internalized bacteria and for the induction of Defensin in the fat body. Within the phagocytic blood cells, has a role in detection of infection and activation of the humoral immune response. The chain is Phagocyte signaling-impaired protein from Aedes aegypti (Yellowfever mosquito).